The primary structure comprises 301 residues: Probable alpha-L-glutamate ligase (301 aa).

The ATP-grasp domain occupies 104–287 (LQFLSRKGID…IAGMIIEFIE (184 aa)). ATP contacts are provided by residues K141, 178–179 (EF), D187, and 211–213 (RSN). Residues D248, E260, and N262 each contribute to the Mg(2+) site. Mn(2+) is bound by residues D248, E260, and N262.

The protein belongs to the RimK family. Mg(2+) serves as cofactor. Requires Mn(2+) as cofactor.

The protein is Probable alpha-L-glutamate ligase of Coxiella burnetii (strain CbuK_Q154) (Coxiella burnetii (strain Q154)).